The primary structure comprises 251 residues: Ubiquinone/menaquinone biosynthesis C-methyltransferase UbiE (251 aa).

Residues Thr-74, Asp-95, 123-124, and Ser-140 each bind S-adenosyl-L-methionine; that span reads NA.

This sequence belongs to the class I-like SAM-binding methyltransferase superfamily. MenG/UbiE family.

The enzyme catalyses a 2-demethylmenaquinol + S-adenosyl-L-methionine = a menaquinol + S-adenosyl-L-homocysteine + H(+). It carries out the reaction a 2-methoxy-6-(all-trans-polyprenyl)benzene-1,4-diol + S-adenosyl-L-methionine = a 5-methoxy-2-methyl-3-(all-trans-polyprenyl)benzene-1,4-diol + S-adenosyl-L-homocysteine + H(+). It participates in quinol/quinone metabolism; menaquinone biosynthesis; menaquinol from 1,4-dihydroxy-2-naphthoate: step 2/2. It functions in the pathway cofactor biosynthesis; ubiquinone biosynthesis. Its function is as follows. Methyltransferase required for the conversion of demethylmenaquinol (DMKH2) to menaquinol (MKH2) and the conversion of 2-polyprenyl-6-methoxy-1,4-benzoquinol (DDMQH2) to 2-polyprenyl-3-methyl-6-methoxy-1,4-benzoquinol (DMQH2). The protein is Ubiquinone/menaquinone biosynthesis C-methyltransferase UbiE of Yersinia pestis bv. Antiqua (strain Angola).